We begin with the raw amino-acid sequence, 394 residues long: MCDNKKPTVKEIAELCLKKFESLPKTGKPTANQWTILAGIVEFNRNTEACQLVSLGCGTKCIGESKLCPNGLILNDSHAEVLARRGFLRFLYQELKQDRIFHWNSTLSTYDMDEHVEFHFLSTQTPCGDACILEEEQPAARAKRQRLDEDSEMVYTGAKLISDLSDDPMLQTPGALRTKPGRGERTLSMSCSDKIARWNVIGVQGALLDVLISKPIYFSSLNFCCDDAQLESLERAIFKRFDCRTFKHTRFQPQRPQINIDPGIRFEFSQRSDWQPSPNGLIWSQVPEELRPYEISVNGKRQGVTKKKMKTSQAALAISKYKLFLTFLELVKFNPKLSEMFDQQLSDPERIAYASCKDLARDYQFAWREIKEKYFLQWTKKPHELLDFNPMSNK.

The 335-residue stretch at 54-388 folds into the A to I editase domain; sequence SLGCGTKCIG…TKKPHELLDF (335 aa). H78 is a Zn(2+) binding site. E80 serves as the catalytic Proton donor. Residues R84 and R85 each contribute to the 1D-myo-inositol hexakisphosphate site. C127 and C191 together coordinate Zn(2+). 1D-myo-inositol hexakisphosphate contacts are provided by K194, R197, K320, K357, and K381.

Belongs to the ADAT1 family. 1D-myo-inositol hexakisphosphate is required as a cofactor. As to expression, widely expressed in early embryos, and later concentrates in the central nervous system.

It catalyses the reaction adenosine(37) in tRNA(Ala) + H2O + H(+) = inosine(37) in tRNA(Ala) + NH4(+). Functionally, specifically deaminates adenosine-37 to inosine in tRNA-Ala. This is tRNA-specific adenosine deaminase 1 from Drosophila melanogaster (Fruit fly).